The sequence spans 506 residues: MAAAGEVVMLGGILLPLLLVVAVSGEPPPISRRSFPEGFIFGTASSSYQYEGGAREGGRGPSIWDTFTHQHPDKIADKSNGDVAADSYHLYKEDVRIMKDMGVDAYRFSISWTRILPNGSLSGGINREGISYYNNLINELLLKGVQPFVTLFHWDSPQALEDKYNGFLSPNIINDYKEYAETCFKEFGDRVKHWITFNEPLSFCVAGYASGGMFAPGRCSPWEGNCSAGDSGREPYTACHHQLLAHAETVRLYKEKYQVLQKGKIGITLVSNWFVPFSRSKSNIDAARRALDFMLGWFMDPLIRGEYPLSMRELVRNRLPQFTKEQSELIKGSFDFIGLNYYTSNYAGSLPPSNGLNNSYSTDARANLTAVRNGIPIGPQAASPWLYIYPQGFRELVLYVKENYGNPTIYITENGVDEFNNKTLPLQEALKDDTRIDYYHKHLLSLLSAIRDGANVKGYFAWSLLDNFEWSNGYTVRFGINFVDYNDGAKRYPKMSAHWFKEFLQK.

An N-terminal signal peptide occupies residues 1–25; sequence MAAAGEVVMLGGILLPLLLVVAVSG. Glutamine 49 contributes to the a beta-D-glucoside binding site. An N-linked (GlcNAc...) asparagine glycan is attached at asparagine 118. A beta-D-glucoside is bound by residues histidine 153 and 198–199; that span reads NE. Catalysis depends on glutamate 199, which acts as the Proton donor. A disulfide bridge links cysteine 219 with cysteine 226. The N-linked (GlcNAc...) asparagine glycan is linked to asparagine 225. Tyrosine 342 contributes to the a beta-D-glucoside binding site. Residues asparagine 357 and asparagine 367 are each glycosylated (N-linked (GlcNAc...) asparagine). A beta-D-glucoside is bound at residue glutamate 413. Residue glutamate 413 is the Nucleophile of the active site. Asparagine 421 carries N-linked (GlcNAc...) asparagine glycosylation. Residues tryptophan 462, 469-470, and phenylalanine 478 contribute to the a beta-D-glucoside site; that span reads EW.

This sequence belongs to the glycosyl hydrolase 1 family.

It carries out the reaction Hydrolysis of terminal, non-reducing beta-D-glucosyl residues with release of beta-D-glucose.. This chain is Beta-glucosidase 13 (BGLU13), found in Oryza sativa subsp. japonica (Rice).